Consider the following 1601-residue polypeptide: Rap guanine nucleotide exchange factor 6 (1601 aa).

At Met1 the chain carries N-acetylmethionine. 2 disordered regions span residues 1–22 and 179–250; these read MNSP…ERTP and PHPQ…QGRD. Ser3 carries the phosphoserine modification. The segment covering 187 to 205 has biased composition (low complexity); the sequence is SSSQSGCSIASDSGSSSLS. Positions 228–241 are enriched in acidic residues; sequence VDSEDDEEEDEEID. Position 280–399 (280–399) interacts with a nucleoside 3',5'-cyclic phosphate; sequence AFANMTMSVR…VEEEGEIVMV (120 aa). Positions 412 to 526 constitute an N-terminal Ras-GEF domain; it reads KGHIVIKATP…LLNIACAAKA (115 aa). The PDZ domain occupies 530 to 615; sequence QVVLQKASRE…LTVKTNIFVF (86 aa). Positions 749–835 constitute a Ras-associating domain; the sequence is PDQVIRVFKV…GRYYLKNNME (87 aa). Positions 860–1088 constitute a Ras-GEF domain; sequence STIEVATQLS…LDVQGGAHKK (229 aa). Disordered regions lie at residues 1192–1274, 1302–1324, 1455–1478, and 1571–1601; these read IRKK…SRSS, ESTG…QHGP, LEST…VYKT, and QRHN…VSAV. 2 stretches are compositionally biased toward low complexity: residues 1229–1238 and 1255–1274; these read SVASSLHSSP and SAKS…SRSS. A compositionally biased stretch (acidic residues) spans 1586–1601; it reads TDADSEADENEQVSAV.

In terms of assembly, interacts with the second PDZ domain of human PTP1e. As to expression, isoform 3 has highest expression levels in the brain, heart, liver, lung and placenta and is barely detectable in skeletal muscle, kidney and pancreas.

It is found in the cytoplasm. Its subcellular location is the cell membrane. In terms of biological role, guanine nucleotide exchange factor (GEF) for Rap1A, Rap2A and M-Ras GTPases. Does not interact with cAMP. The protein is Rap guanine nucleotide exchange factor 6 (RAPGEF6) of Homo sapiens (Human).